The sequence spans 129 residues: Replication initiation control protein YabA (129 aa).

The Zn(2+) site is built by H103, C105, C119, and C122.

It belongs to the YabA family. In terms of assembly, homotetramer. Interacts with both DnaA and DnaN, acting as a bridge between these two proteins. Zn(2+) is required as a cofactor.

Its subcellular location is the cytoplasm. It localises to the nucleoid. Functionally, involved in control of chromosome replication initiation. Inhibits the cooperative binding of DnaA to the oriC region, thus negatively regulating initiation of chromosome replication. Inhibits the ability of DnaA-ATP to form a helix on DNA; does not disassemble preformed DnaA-DNA helices. Decreases the residence time of DnaA on the chromosome at its binding sites (oriC, replication forks and promoter-binding sites). Tethers DnaA to the replication machinery via the DNA polymerase beta sliding clamp subunit (dnaN). Associates with oriC and other DnaA targets on the chromosome in a DnaA-dependent manner. In Listeria welshimeri serovar 6b (strain ATCC 35897 / DSM 20650 / CCUG 15529 / CIP 8149 / NCTC 11857 / SLCC 5334 / V8), this protein is Replication initiation control protein YabA.